Consider the following 306-residue polypeptide: MTNPIYLILADFFDRYIGEPPEKIHPVVFIGKLICFFENVFKSTNSVNKTRDLLFGFLNVILVLAIVFFMTYEIEQIINSISNSYIKISIYSIILSFSIGHKSLIEFSKAPIKFIVNNDLEGAKKSVQCIVSRNTSELDKKHILSASIESASENITDSIIAPLIYAAIFGLPGAFLYRAVNTFDAMIGYKSEKYQYYGKTAAYLDDILNFIPSRIAGMLLIISAPFYGGNIKSAIYGYFNEGNKTPSPNSGYTMATLANSLNMELEKIGYYKLGKGEITIEKALNSLKAVDYSVLLFLIIYTVLLM.

The next 5 membrane-spanning stretches (helical) occupy residues 54–74 (LFGFLNVILVLAIVFFMTYEI), 88–108 (ISIYSIILSFSIGHKSLIEFS), 155–175 (ITDSIIAPLIYAAIFGLPGAF), 215–235 (IAGMLLIISAPFYGGNIKSAI), and 286–306 (SLKAVDYSVLLFLIIYTVLLM).

It belongs to the CobD/CbiB family.

It localises to the cell membrane. It functions in the pathway cofactor biosynthesis; adenosylcobalamin biosynthesis. Its function is as follows. Converts cobyric acid to cobinamide by the addition of aminopropanol on the F carboxylic group. This is Probable cobalamin biosynthesis protein CobD from Methanococcus maripaludis (strain C7 / ATCC BAA-1331).